The sequence spans 198 residues: Nucleoside triphosphate pyrophosphatase (198 aa).

Residue Asp-74 is the Proton acceptor of the active site.

The protein belongs to the Maf family. The cofactor is a divalent metal cation.

Its subcellular location is the cytoplasm. It catalyses the reaction a ribonucleoside 5'-triphosphate + H2O = a ribonucleoside 5'-phosphate + diphosphate + H(+). It carries out the reaction a 2'-deoxyribonucleoside 5'-triphosphate + H2O = a 2'-deoxyribonucleoside 5'-phosphate + diphosphate + H(+). Nucleoside triphosphate pyrophosphatase. May have a dual role in cell division arrest and in preventing the incorporation of modified nucleotides into cellular nucleic acids. The chain is Nucleoside triphosphate pyrophosphatase from Sphingopyxis alaskensis (strain DSM 13593 / LMG 18877 / RB2256) (Sphingomonas alaskensis).